A 560-amino-acid chain; its full sequence is Probable sulfate transporter MT1781 (560 aa).

Helical transmembrane passes span 29–49 (VLAG…YATV), 51–71 (GLPP…YALL), 79–99 (IGPE…MAAG), 105–125 (AVLA…AGTA), 138–158 (VLVG…LGTI), 184–204 (WPTF…TRWA), 207–227 (APGP…MSLD), 256–276 (ALII…VLTA), 333–353 (LIAL…LAMF), 355–375 (IAAL…LSEF), and 394–414 (AAVL…LSIL). An STAS domain is found at 442-557 (DYPQAKRVPG…MTLPTAVQAF (116 aa)).

The protein belongs to the SLC26A/SulP transporter (TC 2.A.53) family.

The protein resides in the cell membrane. The protein is Probable sulfate transporter MT1781 of Mycobacterium tuberculosis (strain CDC 1551 / Oshkosh).